We begin with the raw amino-acid sequence, 468 residues long: Glutathione reductase (468 aa).

Ser-17 and Gly-18 together coordinate FAD. Residue Ser-17 participates in glutathione binding. Arg-24 contributes to the glutathione binding site. Residues Glu-38, Thr-45, Cys-46, and Lys-54 each coordinate FAD. Residues Cys-46 and Cys-51 are joined by a disulfide bond. A glutathione-binding site is contributed by Tyr-103. Ala-119 is a binding site for FAD. NADP(+) contacts are provided by Ala-185, Ile-188, Glu-191, Arg-208, Arg-214, and Gly-276. Asp-317 is a binding site for FAD. Residue Glu-323 participates in NADP(+) binding. Thr-325 is an FAD binding site. Arg-333 contributes to the glutathione binding site. Val-358 lines the NADP(+) pocket. Lys-410 provides a ligand contact to glutathione. His-457 provides a ligand contact to FAD. His-457 acts as the Proton acceptor in catalysis.

This sequence belongs to the class-I pyridine nucleotide-disulfide oxidoreductase family. Homodimer. It depends on FAD as a cofactor.

The protein localises to the cytoplasm. It localises to the mitochondrion. It carries out the reaction 2 glutathione + NADP(+) = glutathione disulfide + NADPH + H(+). In terms of biological role, catalyzes the reduction of glutathione disulfide (GSSG) to reduced glutathione (GSH). Constitutes the major mechanism to maintain a high GSH:GSSG ratio in the cytosol. The sequence is that of Glutathione reductase (gtr-1) from Neurospora crassa (strain ATCC 24698 / 74-OR23-1A / CBS 708.71 / DSM 1257 / FGSC 987).